A 394-amino-acid chain; its full sequence is Putative nickel insertion protein (394 aa).

The protein belongs to the LarC family.

This is Putative nickel insertion protein from Syntrophotalea carbinolica (strain DSM 2380 / NBRC 103641 / GraBd1) (Pelobacter carbinolicus).